A 58-amino-acid polypeptide reads, in one-letter code: UPF0339 protein MA_3316 (58 aa).

Belongs to the UPF0339 family.

The polypeptide is UPF0339 protein MA_3316 (Methanosarcina acetivorans (strain ATCC 35395 / DSM 2834 / JCM 12185 / C2A)).